The primary structure comprises 407 residues: Aminomethyltransferase, mitochondrial (407 aa).

The transit peptide at 1–29 directs the protein to the mitochondrion; it reads MRGGLWQVGQSITRRLGQSDKKTIVRRWY. Residues glutamate 234, arginine 265, and tyrosine 403 each coordinate substrate.

The protein belongs to the GcvT family. In terms of assembly, the glycine cleavage system is composed of four proteins: P, T, L and H.

The protein resides in the mitochondrion. It catalyses the reaction N(6)-[(R)-S(8)-aminomethyldihydrolipoyl]-L-lysyl-[protein] + (6S)-5,6,7,8-tetrahydrofolate = N(6)-[(R)-dihydrolipoyl]-L-lysyl-[protein] + (6R)-5,10-methylene-5,6,7,8-tetrahydrofolate + NH4(+). Its function is as follows. The glycine cleavage system catalyzes the degradation of glycine. This chain is Aminomethyltransferase, mitochondrial (GDCST), found in Flaveria trinervia (Clustered yellowtops).